The primary structure comprises 37 residues: Cytochrome bd-I ubiquinol oxidase subunit X (37 aa).

The helical transmembrane segment at 4-24 (FAWILGTLLACSFGVITALAL) threads the bilayer.

The protein belongs to the cytochrome ubiquinol oxidase subunit X family. May be a subunit of cytochrome bd-I ubiquinol oxidase. Probably interacts with CydA and CydB.

It is found in the cell inner membrane. The enzyme catalyses 2 a ubiquinol + O2(in) + 4 H(+)(in) = 2 a ubiquinone + 2 H2O(in) + 4 H(+)(out). It participates in energy metabolism; oxidative phosphorylation. In terms of biological role, required for correct functioning of cytochrome bd-I oxidase. This protein and AppX may have some functional overlap. The protein is Cytochrome bd-I ubiquinol oxidase subunit X (cydX) of Escherichia coli (strain K12).